Reading from the N-terminus, the 460-residue chain is MTGYSTNMRIKLPLFCLILQFITIILFAVFVRYDHESDARGWHDELKNHSTANADNDFYFRYPSFQDVHVMIFIGFGFLMTFLKRYGFSSVAFNFLIAAFGLQWSTLIQGFFHGFHDGKIHVGIESMINADFCTGAVLISFGAVLGKTSPVQLIVMTLIEVTLFGINEYIILNIVGAKDAGGSMTIHTFGAYFGLIVSRVLYRADLDKSRQREGSVYHSDLFAMIGTIYLWMFWPSFNSAVTAHGDDQHRTVLNTYYSLAACTLATFGFSALLNGEGKLDMVHIQNAALAGGVAVGTSGEMMLTPFGAMIAGTLAGIVSVLGYKYLTPVLDSKLKIQDTCGVHNLHGMPGILGAVIGAIVALFATADIYGDGMDDVFPMIFDGSRTAKQQSLYQFLALLVALGFAIVGGTVVGFILKLPLFGTPSDAECFEDAVYWEVPGGEGHQQLTVVVNNEDPDTQA.

The Cytoplasmic portion of the chain corresponds to methionine 1–isoleucine 10. Residues lysine 11 to valine 31 traverse the membrane as a helical segment. At arginine 32–tyrosine 62 the chain is on the extracellular side. Asparagine 48 is a glycosylation site (N-linked (GlcNAc...) asparagine). Residues proline 63–leucine 83 form a helical membrane-spanning segment. At lysine 84–glycine 87 the chain is on the cytoplasmic side. Residues phenylalanine 88–isoleucine 108 traverse the membrane as a helical segment. The Extracellular portion of the chain corresponds to glutamine 109 to glutamate 125. Residues serine 126–glycine 146 form a helical membrane-spanning segment. At lysine 147 to proline 150 the chain is on the cytoplasmic side. The helical transmembrane segment at valine 151 to isoleucine 171 threads the bilayer. Residues leucine 172 to aspartate 179 lie on the Extracellular side of the membrane. A helical transmembrane segment spans residues alanine 180–tyrosine 202. The Cytoplasmic portion of the chain corresponds to arginine 203–aspartate 220. Residues leucine 221–valine 241 form a helical membrane-spanning segment. The Extracellular portion of the chain corresponds to threonine 242 to valine 252. A helical transmembrane segment spans residues leucine 253 to leucine 273. At asparagine 274–histidine 283 the chain is on the cytoplasmic side. A helical transmembrane segment spans residues isoleucine 284 to threonine 304. Residue proline 305 is a topological domain, extracellular. A helical transmembrane segment spans residues phenylalanine 306–leucine 326. At threonine 327 to glycine 347 the chain is on the cytoplasmic side. A helical transmembrane segment spans residues methionine 348–isoleucine 368. Over tyrosine 369 to glutamine 394 the chain is Extracellular. Residues phenylalanine 395 to isoleucine 415 traverse the membrane as a helical segment. Topologically, residues leucine 416–alanine 460 are cytoplasmic.

The protein belongs to the ammonium transporter (TC 2.A.49) family. Rh subfamily.

It localises to the basolateral cell membrane. Its subcellular location is the cytoplasmic vesicle membrane. Functions as a specific ammonium transporter. The polypeptide is Ammonium transporter Rh type B-A (rhbg-a) (Xenopus laevis (African clawed frog)).